The primary structure comprises 167 residues: Telethonin (167 aa).

The residue at position 39 (Ser39) is a Phosphoserine. The disordered stretch occupies residues 142–167; it reads PVVPVSKPGPLRRTLSRSMSQEAQRG. A compositionally biased stretch (polar residues) spans 157 to 167; the sequence is SRSMSQEAQRG.

In terms of assembly, interacts with MYOZ1, MYOZ2 and MYOZ3. Interacts with CSRP3. Interacts directly with the N-terminal Ig-like domains of 2 titin (TTN) molecules. Interacts with ANKRD2; the interaction is direct.

Its subcellular location is the cytoplasm. The protein resides in the myofibril. The protein localises to the sarcomere. Muscle assembly regulating factor. Mediates the antiparallel assembly of titin (TTN) molecules at the sarcomeric Z-disk. In Mus musculus (Mouse), this protein is Telethonin (Tcap).